The chain runs to 514 residues: Protein farnesyltransferase subunit beta (514 aa).

Residues 1-13 (MRHHTKNLRRRAI) are compositionally biased toward basic residues. The disordered stretch occupies residues 1-56 (MRHHTKNLRRRAIFLRTTPRGNMDSSSSVATSTSSSSNHRLVRSSEGSPSAGGDDI). Residues 25–39 (SSSSVATSTSSSSNH) are compositionally biased toward low complexity. PFTB repeat units lie at residues 180–221 (AESL…AVVG), 231–272 (RRAL…SLLN), 293–334 (FTGL…SLLG), 346–388 (IERL…PLIE), and 410–454 (REGL…SSAQ). (2E,6E)-farnesyl diphosphate is bound by residues 319–322 (HGAY) and 367–370 (RTNK). Positions 373 and 375 each coordinate Zn(2+). 376-379 (YSHW) provides a ligand contact to (2E,6E)-farnesyl diphosphate. Zn(2+) is bound at residue H442.

The protein belongs to the protein prenyltransferase subunit beta family. Heterodimer of an alpha and a beta subunit. Interacts with RAS1 and RAS2. The cofactor is Zn(2+). In terms of tissue distribution, highly expressed in mycelium, conidium, conidial germination, early formed appressorium and the late infection hypha.

It localises to the cytoplasm. It catalyses the reaction L-cysteinyl-[protein] + (2E,6E)-farnesyl diphosphate = S-(2E,6E)-farnesyl-L-cysteinyl-[protein] + diphosphate. Catalyzes the transfer of a farnesyl moiety from farnesyl diphosphate to a cysteine at the fourth position from the C-terminus of several proteins having the C-terminal sequence Cys-aliphatic-aliphatic-X. The beta subunit is responsible for peptide-binding. The polypeptide is Protein farnesyltransferase subunit beta (RAM1) (Pyricularia oryzae (strain 70-15 / ATCC MYA-4617 / FGSC 8958) (Rice blast fungus)).